Here is a 133-residue protein sequence, read N- to C-terminus: Small ribosomal subunit protein uS12 (133 aa).

3-methylthioaspartic acid is present on D89. Residues 103–133 (DTAGVAGRTQRRSKYGAKRPKPGQAAPAKKK) form a disordered region. A compositionally biased stretch (basic residues) spans 111–123 (TQRRSKYGAKRPK). Residues 124–133 (PGQAAPAKKK) show a composition bias toward low complexity.

This sequence belongs to the universal ribosomal protein uS12 family. In terms of assembly, part of the 30S ribosomal subunit. Contacts proteins S8 and S17. May interact with IF1 in the 30S initiation complex.

In terms of biological role, with S4 and S5 plays an important role in translational accuracy. Its function is as follows. Interacts with and stabilizes bases of the 16S rRNA that are involved in tRNA selection in the A site and with the mRNA backbone. Located at the interface of the 30S and 50S subunits, it traverses the body of the 30S subunit contacting proteins on the other side and probably holding the rRNA structure together. The combined cluster of proteins S8, S12 and S17 appears to hold together the shoulder and platform of the 30S subunit. The chain is Small ribosomal subunit protein uS12 from Bacteroides thetaiotaomicron (strain ATCC 29148 / DSM 2079 / JCM 5827 / CCUG 10774 / NCTC 10582 / VPI-5482 / E50).